The primary structure comprises 477 residues: Interferon gamma receptor 1 (477 aa).

The signal sequence occupies residues 1 to 25 (MGPQAAAGRMILLVVLMLSAKVGSG). Over 26–254 (ALTSTEDPEP…PPFHDDRKDS (229 aa)) the chain is Extracellular. Asn-61 and Asn-85 each carry an N-linked (GlcNAc...) asparagine glycan. 4 cysteine pairs are disulfide-bonded: Cys-83/Cys-91, Cys-128/Cys-174, Cys-203/Cys-208, and Cys-222/Cys-243. A helical transmembrane segment spans residues 255–275 (IWILVVAPLTVFTVVILVFAY). Residues 276–477 (WYTKKNSFKR…RLTGEAQELS (202 aa)) are Cytoplasmic-facing. Disordered stretches follow at residues 335-386 (TVTA…LSSN) and 402-446 (SDSG…SGYD). Position 362 is a phosphoserine (Ser-362). Phosphothreonine is present on Thr-367. A Phosphoserine modification is found at Ser-370. 2 positions are modified to phosphothreonine: Thr-373 and Thr-375. Over residues 375–386 (TQRRSFSLLSSN) the composition is skewed to polar residues. A phosphoserine mark is found at Ser-379 and Ser-402. Residues 402 to 416 (SDSGLVGSGSSISDL) show a composition bias toward low complexity. A Phosphotyrosine modification is found at Tyr-445.

The protein belongs to the type II cytokine receptor family. In terms of assembly, monomer. Heterodimer with IFNGR2, to form the IFNG receptor complex. Interacts with JAK1. Interacts (when phosphorylated) with STAT1. Interacts with SOCS1. Phosphorylated at Ser/Thr residues. Phosphorylation of Tyr-445 is required for IFNG receptor signal transduction. Influenza virus infection leads to phosphorylation in a CSNK1A1-dependent manner. Post-translationally, ubiquitinated after phosphorylation in a CSNK1A1-dependent manner, leading to the lysosome-dependent degradation. Proteasomally degraded through 'Lys-48'-mediated ubiquitination. Ubiquitination is necessary for efficient IFNGR1 signaling.

Its subcellular location is the cell membrane. Receptor subunit for interferon gamma/INFG that plays crucial roles in antimicrobial, antiviral, and antitumor responses by activating effector immune cells and enhancing antigen presentation (, PubMed:20926559, PubMed:27286456). Associates with transmembrane accessory factor IFNGR2 to form a functional receptor. Upon ligand binding, the intracellular domain of IFNGR1 opens out to allow association of downstream signaling components JAK1 and JAK2. In turn, activated JAK1 phosphorylates IFNGR1 to form a docking site for STAT1. Subsequent phosphorylation of STAT1 leads to its dimerization, translocation to the nucleus, and stimulation of target gene transcription. STAT3 can also be activated in a similar manner although activation seems weaker. IFNGR1 intracellular domain phosphorylation also provides a docking site for SOCS1 that regulates the JAK-STAT pathway by competing with STAT1 binding to IFNGR1. The polypeptide is Interferon gamma receptor 1 (Mus musculus (Mouse)).